The sequence spans 170 residues: Cathelicidin antimicrobial peptide (170 aa).

The signal sequence occupies residues Met1 to Ala30. Residues Gln31–Lys131 constitute a propeptide, cathelin-like domain (CLD). 2 disulfides stabilise this stretch: Cys86/Cys97 and Cys108/Cys125. The active core stretch occupies residues Leu150 to Gly162.

This sequence belongs to the cathelicidin family. Monomer, homodimer or homotrimer (in vitro). Oligomerizes as tetra- or hexamer in solution (in vitro). Proteolytically cleaved by proteinase PRTN3 into antibacterial peptide LL-37. Proteolytically cleaved by cathepsin CTSG and neutrophil elastase ELANE. Post-translationally, resistant to proteolytic degradation in solution, and when bound to both zwitterionic (mimicking mammalian membranes) and negatively charged membranes (mimicking bacterial membranes). In terms of processing, after secretion onto the skin surface, the CAMP gene product is processed by a serine protease-dependent mechanism into multiple novel antimicrobial peptides distinct from and shorter than cathelicidin LL-37. These peptides show enhanced antimicrobial action, acquiring the ability to kill skin pathogens such as S.aureus, E.coli and C.albicans. These peptides have lost the ability to stimulate CXCL8/IL8 release from keratinocytes. The peptides act synergistically, killing bacteria at lower concentrations when present together, and maintain activity at increased salt condition.

Its subcellular location is the secreted. It is found in the vesicle. Antimicrobial protein that is an integral component of the innate immune system. Binds to bacterial lipopolysaccharides (LPS). Acts via neutrophil N-formyl peptide receptors to enhance the release of CXCL2. Postsecretory processing generates multiple cathelicidin antimicrobial peptides with various lengths which act as a topical antimicrobial defense in sweat on skin. The unprocessed precursor form, cathelicidin antimicrobial peptide, inhibits the growth of Gram-negative E.coli and E.aerogenes with efficiencies comparable to that of the mature peptide LL-37 (in vitro). Its function is as follows. Antimicrobial peptide that is an integral component of the innate immune system. Binds to bacterial lipopolysaccharides (LPS). Causes membrane permeabilization by forming transmembrane pores (in vitro). Causes lysis of E.coli. Exhibits antimicrobial activity against Gram-negative bacteria such as P.aeruginosa, S.typhimurium, E.aerogenes, E.coli and P.syringae, Gram-positive bacteria such as L.monocytogenes, S.epidermidis, S.pyogenes and S.aureus, as well as vancomycin-resistant enterococci (in vitro). Exhibits antimicrobial activity against methicillin-resistant S.aureus, P.mirabilis, and C.albicans in low-salt media, but not in media containing 100 mM NaCl (in vitro). Forms chiral supramolecular assemblies with quinolone signal (PQS) molecules of P.aeruginosa, which may lead to interference of bacterial quorum signaling and perturbance of bacterial biofilm formation. May form supramolecular fiber-like assemblies on bacterial membranes. Induces cytokine and chemokine producation as well as TNF/TNFA and CSF2/GMCSF production in normal human keratinocytes. Exhibits hemolytic activity against red blood cells. In terms of biological role, exhibits antimicrobial activity against E.coli and B.megaterium (in vitro). This is Cathelicidin antimicrobial peptide from Ateles fusciceps (Brown-headed spider monkey).